A 250-amino-acid chain; its full sequence is NAD-dependent protein deacylase 1 (250 aa).

The Deacetylase sirtuin-type domain maps to 1–250 (MRAVVELLAG…PELLRRAFPG (250 aa)). 19-39 (GAGVSAESGIPTFRDALGGLW) is an NAD(+) binding site. Positions 64 and 67 each coordinate substrate. 98–101 (QNVD) provides a ligand contact to NAD(+). Histidine 116 acts as the Proton acceptor in catalysis. Cysteine 124, cysteine 127, cysteine 152, and cysteine 155 together coordinate Zn(2+). Residues 192–194 (GTS), 218–220 (NPQ), and alanine 236 contribute to the NAD(+) site.

The protein belongs to the sirtuin family. Class III subfamily. Zn(2+) is required as a cofactor.

It localises to the cytoplasm. It catalyses the reaction N(6)-acetyl-L-lysyl-[protein] + NAD(+) + H2O = 2''-O-acetyl-ADP-D-ribose + nicotinamide + L-lysyl-[protein]. The enzyme catalyses N(6)-succinyl-L-lysyl-[protein] + NAD(+) + H2O = 2''-O-succinyl-ADP-D-ribose + nicotinamide + L-lysyl-[protein]. NAD-dependent lysine deacetylase and desuccinylase that specifically removes acetyl and succinyl groups on target proteins. Modulates the activities of several proteins which are inactive in their acylated form. The sequence is that of NAD-dependent protein deacylase 1 from Pseudomonas aeruginosa (strain ATCC 15692 / DSM 22644 / CIP 104116 / JCM 14847 / LMG 12228 / 1C / PRS 101 / PAO1).